Reading from the N-terminus, the 441-residue chain is Protein cortex (441 aa).

WD repeat units follow at residues 110 to 148 (SITSFPDVLDWSHDDILVAALGKKYHKWSWRTQSPVDQG), 149 to 187 (QTMFDIRCCKFDPKGKRLLLGTDMRVEVHNELSKCQFVQ), 193 to 233 (IQIC…KSLV), 235 to 276 (IEGA…RFMK), 277 to 320 (TNEI…KLRQ), 345 to 379 (SLWSLDVNVPYPKSSELVVMSNFDTVVDHWGESHT), and 380 to 420 (GLNR…KILA). Positions 379–390 (TGLNRIRTMVFS) match the D-box motif.

It belongs to the WD repeat CORT family.

The protein localises to the cytoplasm. Controls wing pigmentation patterning, possibly by regulating scale cell development. Probably acts as an activator of the anaphase promoting complex/cyclosome (APC/C) that promotes the ubiquitin ligase activity and substrate specificity of the APC/C. The protein is Protein cortex of Biston betularia (Pepper-and-salt geometer moth).